The sequence spans 114 residues: uncharacterized protein (114 aa).

In terms of domain architecture, HTH arsR-type spans 2–97 (ESEPLYKLKA…VARKVLARVL (96 aa)). The H-T-H motif DNA-binding region spans 37-60 (GELLSSDVGLESSNLSQQLGVLRR).

This is an uncharacterized protein from Mycobacterium tuberculosis (strain CDC 1551 / Oshkosh).